The primary structure comprises 407 residues: Eukaryotic initiation factor 4A-II (407 aa).

Residues 1 to 23 (MSGGSADYSRDHGGPEGMEPDGV) are disordered. A Q motif motif is present at residues 33–61 (DNFDDMNLKESLLRGIYAYGFEKPSAIQQ). A Helicase ATP-binding domain is found at 64–235 (IIPCIKGYDV…KKFMREPIRI (172 aa)). 77–84 (AQSGTGKT) is a binding site for ATP. Residues 183-186 (DEAD) carry the DEAD box motif. The 162-residue stretch at 246–407 (GIKQFYINVE…EMPMNVADLI (162 aa)) folds into the Helicase C-terminal domain.

It belongs to the DEAD box helicase family. eIF4A subfamily. EIF4F is a multi-subunit complex, the composition of which varies with external and internal environmental conditions. It is composed of at least EIF4A, EIF4E and EIF4G1/EIFFG3. Interacts with EIF4E.

The enzyme catalyses ATP + H2O = ADP + phosphate + H(+). Functionally, ATP-dependent RNA helicase which is a subunit of the eIF4F complex involved in cap recognition and is required for mRNA binding to ribosome. In the current model of translation initiation, eIF4A unwinds RNA secondary structures in the 5'-UTR of mRNAs which is necessary to allow efficient binding of the small ribosomal subunit, and subsequent scanning for the initiator codon. This chain is Eukaryotic initiation factor 4A-II (EIF4A2), found in Gallus gallus (Chicken).